The following is a 260-amino-acid chain: Uroplakin-1b (260 aa).

The Cytoplasmic segment spans residues 1-15; it reads MAKDNSTVRCFQGLL. Residues 16-36 traverse the membrane as a helical segment; that stretch reads IFGNVIIGCCGIALTAECIFF. Residues 37–60 lie on the Extracellular side of the membrane; the sequence is VSDQHSLYPLLEATDNDDIYGAAW. Residues 61–81 form a helical membrane-spanning segment; sequence IGIFVGICLFCLSVLGIVGIM. The Cytoplasmic segment spans residues 82 to 86; sequence KSSRK. The chain crosses the membrane as a helical span at residues 87–107; it reads ILLAYFILMFIVYAFEVASCI. Residues 108-229 are Extracellular-facing; the sequence is TAATQQDFFT…ELISGPMNRH (122 aa). The chain crosses the membrane as a helical span at residues 230–250; that stretch reads AWGVAWFGFAILCWTFWVLLG. At 251–260 the chain is on the cytoplasmic side; the sequence is TMFYWSRIEY.

The protein belongs to the tetraspanin (TM4SF) family. As to quaternary structure, heterodimer with uroplakin-3A (UPK3A) or uroplakin-3B (UPK3B). N-glycosylated with high-mannose oligosaccharides. Bladder epithelium.

Its subcellular location is the membrane. Its function is as follows. Component of the asymmetric unit membrane (AUM); a highly specialized biomembrane elaborated by terminally differentiated urothelial cells. May play an important role in normal bladder epithelial physiology, possibly in regulating membrane permeability of superficial umbrella cells or in stabilizing the apical membrane through AUM/cytoskeletal interactions. This Homo sapiens (Human) protein is Uroplakin-1b (UPK1B).